The primary structure comprises 129 residues: Antimicrobial peptide NK-lysin (129 aa).

Residues 1-6 (PGLAFS) form the signal peptide. A propeptide spanning residues 7–46 (GLTPEHSALARAHPCDGEQFCQNLAPEDPQGDQLLQREEL) is cleaved from the precursor. The 81-residue stretch at 46–126 (LGLICESCRK…VDIKICKEKT (81 aa)) folds into the Saposin B-type domain. 3 disulfides stabilise this stretch: Cys50–Cys122, Cys53–Cys116, and Cys81–Cys91. Residues 125–129 (KTGLI) constitute a propeptide that is removed on maturation.

As to expression, cytotoxic T and NK cells.

It is found in the secreted. Its function is as follows. May be an effector molecule of cytotoxic activity. High activity against E.coli and B.megaterium, moderate against A.calcoaceticus and S.pyogenes. No activity against P.aeruginosa, S.aureus and Salmonella. Has some antifungal activity against C.albicans. This is Antimicrobial peptide NK-lysin (NKL) from Sus scrofa (Pig).